The chain runs to 447 residues: Asparagine--tRNA ligase (447 aa).

Belongs to the class-II aminoacyl-tRNA synthetase family. In terms of assembly, homodimer.

The protein localises to the cytoplasm. It catalyses the reaction tRNA(Asn) + L-asparagine + ATP = L-asparaginyl-tRNA(Asn) + AMP + diphosphate + H(+). This chain is Asparagine--tRNA ligase, found in Streptococcus pneumoniae serotype 4 (strain ATCC BAA-334 / TIGR4).